The sequence spans 792 residues: Phenylalanine--tRNA ligase beta subunit (792 aa).

One can recognise a tRNA-binding domain in the interval 38-148; it reads NTKLAGFIVA…DDYKVGNKFF (111 aa). The B5 domain maps to 406 to 482; it reads EADTKVSFDY…RIYGYDKIKE (77 aa). Positions 460, 466, 469, and 470 each coordinate Mg(2+). The region spanning 698 to 790 is the FDX-ACB domain; the sequence is YKHQSVKRDF…VHKNTGGILR (93 aa).

This sequence belongs to the phenylalanyl-tRNA synthetase beta subunit family. Type 1 subfamily. As to quaternary structure, tetramer of two alpha and two beta subunits. The cofactor is Mg(2+).

Its subcellular location is the cytoplasm. The enzyme catalyses tRNA(Phe) + L-phenylalanine + ATP = L-phenylalanyl-tRNA(Phe) + AMP + diphosphate + H(+). This is Phenylalanine--tRNA ligase beta subunit from Wolbachia sp. subsp. Brugia malayi (strain TRS).